A 706-amino-acid polypeptide reads, in one-letter code: Catalase HPII (706 aa).

Residues histidine 77 and asparagine 151 contribute to the active site. Tyrosine 365 is a heme binding site. The disordered stretch occupies residues 512 to 532; it reads EPPEEQVDESAPVSPALSQVT.

Belongs to the catalase family. HPII subfamily. Heme is required as a cofactor.

It localises to the cytoplasm. The catalysed reaction is 2 H2O2 = O2 + 2 H2O. Its function is as follows. Decomposes hydrogen peroxide into water and oxygen; serves to protect cells from the toxic effects of hydrogen peroxide. This Mycobacterium avium protein is Catalase HPII (katE).